Reading from the N-terminus, the 327-residue chain is tRNA-dihydrouridine(20/20a) synthase (327 aa).

Residues 17-19 (PML) and glutamine 69 each bind FMN. The active-site Proton donor is cysteine 99. FMN-binding positions include lysine 138, histidine 170, 210–212 (NGG), and 232–233 (GR).

It belongs to the Dus family. DusA subfamily. The cofactor is FMN.

It carries out the reaction 5,6-dihydrouridine(20) in tRNA + NADP(+) = uridine(20) in tRNA + NADPH + H(+). The enzyme catalyses 5,6-dihydrouridine(20) in tRNA + NAD(+) = uridine(20) in tRNA + NADH + H(+). It catalyses the reaction 5,6-dihydrouridine(20a) in tRNA + NADP(+) = uridine(20a) in tRNA + NADPH + H(+). The catalysed reaction is 5,6-dihydrouridine(20a) in tRNA + NAD(+) = uridine(20a) in tRNA + NADH + H(+). Catalyzes the synthesis of 5,6-dihydrouridine (D), a modified base found in the D-loop of most tRNAs, via the reduction of the C5-C6 double bond in target uridines. Specifically modifies U20 and U20a in tRNAs. This chain is tRNA-dihydrouridine(20/20a) synthase, found in Pasteurella multocida (strain Pm70).